Consider the following 136-residue polypeptide: MSALVYFSSSSENTHRFMQRLGLPATRIPLNERERIRVDEPYILVVPSYGGGGMAGAVPRQVIRFLNDEHNRARIRGVIASGNRNFGDAWGCAGDVIAQKYGVPWLYRFELMGTQRDIDNVRRGVNEFWQQLPRSA.

It belongs to the NrdI family.

Probably involved in ribonucleotide reductase function. The chain is Protein NrdI from Salmonella paratyphi A (strain ATCC 9150 / SARB42).